The following is a 120-amino-acid chain: Crustacean hyperglycemic hormones 1 (120 aa).

The first 27 residues, 1–27, serve as a signal peptide directing secretion; the sequence is MTAFRMVWSMLLASLLMLLVASSTAPA. Intrachain disulfides connect cysteine 53–cysteine 89, cysteine 69–cysteine 85, and cysteine 72–cysteine 98. The residue at position 118 (valine 118) is a Valine amide.

This sequence belongs to the arthropod CHH/MIH/GIH/VIH hormone family.

It is found in the secreted. Functionally, hormone found in the sinus gland of isopods and decapods which controls the blood sugar level. Has a secretagogue action over the amylase released from the midgut gland. May act as a stress hormone and may be involved in the control of molting and reproduction. This chain is Crustacean hyperglycemic hormones 1 (CHH1), found in Penaeus monodon (Giant tiger prawn).